The sequence spans 96 residues: ATP synthase subunit c (96 aa).

Transmembrane regions (helical) follow at residues 28–50 (LGAG…NIGA) and 75–95 (AVTE…LFVL).

This sequence belongs to the ATPase C chain family. As to quaternary structure, F-type ATPases have 2 components, F(1) - the catalytic core - and F(0) - the membrane proton channel. F(1) has five subunits: alpha(3), beta(3), gamma(1), delta(1), epsilon(1). F(0) has three main subunits: a(1), b(2) and c(10-14). The alpha and beta chains form an alternating ring which encloses part of the gamma chain. F(1) is attached to F(0) by a central stalk formed by the gamma and epsilon chains, while a peripheral stalk is formed by the delta and b chains.

It is found in the cell inner membrane. Its function is as follows. F(1)F(0) ATP synthase produces ATP from ADP in the presence of a proton or sodium gradient. F-type ATPases consist of two structural domains, F(1) containing the extramembraneous catalytic core and F(0) containing the membrane proton channel, linked together by a central stalk and a peripheral stalk. During catalysis, ATP synthesis in the catalytic domain of F(1) is coupled via a rotary mechanism of the central stalk subunits to proton translocation. In terms of biological role, key component of the F(0) channel; it plays a direct role in translocation across the membrane. A homomeric c-ring of between 10-14 subunits forms the central stalk rotor element with the F(1) delta and epsilon subunits. In Petrotoga mobilis (strain DSM 10674 / SJ95), this protein is ATP synthase subunit c.